A 264-amino-acid chain; its full sequence is MKQYKDFCRHVLEHGEKKGDRTGTGTISTFGYQMRFNLREGFPMLTTKKLHFKSIAHELLWFLKGDTNVRYLQENGVRIWNEWADENGELGPVYGSQWRSWRGADGETIDQISRLIEDIKTNPNSRRLIVSAWNVGEIDKMALPPCHCLFQFYVSDGKLSCQLYQRSADVFLGVPFNIASYALLTMIIAHVTGLEPGEFIHTFGDVHIYQNHIEQVNLQLERDVRPLPQLRFARKVDSIFNFAFEDFIIEDYDPHPHIKGAVSV.

Arg-21 serves as a coordination point for dUMP. His-51 is a binding site for (6R)-5,10-methylene-5,6,7,8-tetrahydrofolate. A dUMP-binding site is contributed by 126–127; that stretch reads RR. Cys-146 acts as the Nucleophile in catalysis. Residues 166–169, Asn-177, and 207–209 contribute to the dUMP site; these read RSAD and HIY. Asp-169 contributes to the (6R)-5,10-methylene-5,6,7,8-tetrahydrofolate binding site. Ser-263 contributes to the (6R)-5,10-methylene-5,6,7,8-tetrahydrofolate binding site.

The protein belongs to the thymidylate synthase family. Bacterial-type ThyA subfamily. As to quaternary structure, homodimer.

The protein localises to the cytoplasm. The catalysed reaction is dUMP + (6R)-5,10-methylene-5,6,7,8-tetrahydrofolate = 7,8-dihydrofolate + dTMP. Its pathway is pyrimidine metabolism; dTTP biosynthesis. Its function is as follows. Catalyzes the reductive methylation of 2'-deoxyuridine-5'-monophosphate (dUMP) to 2'-deoxythymidine-5'-monophosphate (dTMP) while utilizing 5,10-methylenetetrahydrofolate (mTHF) as the methyl donor and reductant in the reaction, yielding dihydrofolate (DHF) as a by-product. This enzymatic reaction provides an intracellular de novo source of dTMP, an essential precursor for DNA biosynthesis. This chain is Thymidylate synthase 2, found in Bacillus subtilis (strain 168).